A 240-amino-acid chain; its full sequence is tRNA (guanine-N(1)-)-methyltransferase (240 aa).

S-adenosyl-L-methionine-binding positions include Gly-110 and 129–134 (LGDFVL).

This sequence belongs to the RNA methyltransferase TrmD family. In terms of assembly, homodimer.

It localises to the cytoplasm. The catalysed reaction is guanosine(37) in tRNA + S-adenosyl-L-methionine = N(1)-methylguanosine(37) in tRNA + S-adenosyl-L-homocysteine + H(+). Its function is as follows. Specifically methylates guanosine-37 in various tRNAs. The polypeptide is tRNA (guanine-N(1)-)-methyltransferase (Clostridium botulinum (strain Langeland / NCTC 10281 / Type F)).